The chain runs to 581 residues: Zinc finger protein 674 (581 aa).

One can recognise a KRAB domain in the interval 8–79 (LTFKDVFVDF…DGGTPVRTCA (72 aa)). 4 consecutive C2H2-type zinc fingers follow at residues 224-246 (YKCT…QRTH), 252-274 (YECC…QRTH), 280-302 (YECS…QRTH), and 308-330 (FVCD…EKTH). A compositionally biased stretch (basic and acidic residues) spans 357–371 (PQCSEHGKASDEKPS). The tract at residues 357-377 (PQCSEHGKASDEKPSPTKHWR) is disordered. 7 C2H2-type zinc fingers span residues 385–407 (YECS…QRIH), 413–435 (YECS…HRTH), 441–463 (YECR…QRMH), 469–491 (YKCN…QRIH), 497–519 (YECT…QRIH), 525–547 (YKCS…HRTH), and 553–575 (YECR…QRSH).

It belongs to the krueppel C2H2-type zinc-finger protein family. As to expression, expressed in testis.

Its subcellular location is the nucleus. Functionally, may be involved in transcriptional regulation. In Homo sapiens (Human), this protein is Zinc finger protein 674 (ZNF674).